The following is a 165-amino-acid chain: uncharacterized protein (165 aa).

Residues 1 to 165 (MDIKVVKGSI…EAWEKVLGLR (165 aa)) enclose the Macro domain.

This is an uncharacterized protein from Aquifex aeolicus (strain VF5).